The following is a 246-amino-acid chain: MSLPYRHVVILTGAGISAESGIQTFRAQDGLWENHRIEDVATPEGFQRDPDMVLEFYNQRRRKLLSDAIQPNPAHLALGKLEKELQGSVTVITQNIDNLHERGGSQNIIHMHGELLKARCPESNQTVEQKEDIRHGDLCHCCQMPAQMRPHIVWFGEMPLRMGDIYAALEQADLFVSIGTSGVVYPAAGFVHDARMHGAHTIEINLEPSAVESEFAEKRYGKASIEVPRLVEEILAAQARAKESAA.

Residues 1–237 form the Deacetylase sirtuin-type domain; the sequence is MSLPYRHVVI…PRLVEEILAA (237 aa). 13 to 32 contributes to the NAD(+) binding site; it reads GAGISAESGIQTFRAQDGLW. Positions 57 and 60 each coordinate substrate. 94 to 97 lines the NAD(+) pocket; it reads QNID. The Proton acceptor role is filled by His-112. Residues Cys-120 and Cys-139 each contribute to the Zn(2+) site. Residues 179–181, 205–207, and Ala-223 each bind NAD(+); these read GTS and NLE.

Belongs to the sirtuin family. Class III subfamily. It depends on Zn(2+) as a cofactor.

The protein localises to the cytoplasm. It carries out the reaction N(6)-acetyl-L-lysyl-[protein] + NAD(+) + H2O = 2''-O-acetyl-ADP-D-ribose + nicotinamide + L-lysyl-[protein]. The catalysed reaction is N(6)-succinyl-L-lysyl-[protein] + NAD(+) + H2O = 2''-O-succinyl-ADP-D-ribose + nicotinamide + L-lysyl-[protein]. In terms of biological role, NAD-dependent lysine deacetylase and desuccinylase that specifically removes acetyl and succinyl groups on target proteins. Modulates the activities of several proteins which are inactive in their acylated form. This is NAD-dependent protein deacylase from Vibrio cholerae serotype O1 (strain ATCC 39315 / El Tor Inaba N16961).